We begin with the raw amino-acid sequence, 183 residues long: Ferritin heavy chain (183 aa).

Met-1 is modified (N-acetylmethionine). At Thr-2 the chain carries N-acetylthreonine; in Ferritin heavy chain, N-terminally processed. The Ferritin-like diiron domain maps to 11-160 (QNYHQDSEAA…DHVTNLRKMG (150 aa)). Residues Glu-28, Glu-63, His-66, Glu-108, and Gln-142 each coordinate Fe cation. Residues Ser-179 and Ser-183 each carry the phosphoserine modification.

It belongs to the ferritin family. In terms of assembly, oligomer of 24 subunits. There are two types of subunits: L (light) chain and H (heavy) chain. The major chain can be light or heavy, depending on the species and tissue type. The functional molecule forms a roughly spherical shell with a diameter of 12 nm and contains a central cavity into which the insoluble mineral iron core is deposited. Interacts with NCOA4; NCOA4 promotes targeting of the iron-binding ferritin complex to autolysosomes following starvation or iron depletion.

It localises to the cytoplasm. The protein localises to the lysosome. Its subcellular location is the cytoplasmic vesicle. The protein resides in the autophagosome. It carries out the reaction 4 Fe(2+) + O2 + 4 H(+) = 4 Fe(3+) + 2 H2O. Stores iron in a soluble, non-toxic, readily available form. Important for iron homeostasis. Has ferroxidase activity. Iron is taken up in the ferrous form and deposited as ferric hydroxides after oxidation. Also plays a role in delivery of iron to cells. Mediates iron uptake in capsule cells of the developing kidney. Delivery to lysosomes is mediated by the cargo receptor NCOA4 for autophagic degradation and release of iron. In Pongo abelii (Sumatran orangutan), this protein is Ferritin heavy chain (FTH1).